The sequence spans 73 residues: uncharacterized protein (73 aa).

A helical membrane pass occupies residues 37–57 (AIIITVAVVAFGALTLGAIGA).

It is found in the membrane. This is an uncharacterized protein from Natronomonas pharaonis (strain ATCC 35678 / DSM 2160 / CIP 103997 / JCM 8858 / NBRC 14720 / NCIMB 2260 / Gabara) (Halobacterium pharaonis).